Here is a 450-residue protein sequence, read N- to C-terminus: uncharacterized protein (450 aa).

The next 12 helical transmembrane spans lie at 10–30 (IIVL…LVIA), 53–73 (LGGG…AIAI), 95–115 (TAGN…LFAI), 120–140 (LLPV…SIFN), 148–168 (AVAC…PVGF), 199–219 (LAML…IFIT), 242–262 (IANI…ATFA), 267–287 (TSST…CGIF), 302–322 (LMAM…VINA), 343–363 (IAAL…GSSF), 378–398 (LSFG…AALG), and 428–448 (VVPT…IAAM).

It localises to the cell membrane. This is an uncharacterized protein from Haemophilus influenzae (strain ATCC 51907 / DSM 11121 / KW20 / Rd).